The following is a 610-amino-acid chain: UvrABC system protein C (610 aa).

The 79-residue stretch at 16–94 folds into the GIY-YIG domain; the sequence is SQPGVYRMYD…IKLYQPRYNV (79 aa). In terms of domain architecture, UVR spans 204-239; it reads DQVLTQLISRMETASQNLEFEEAARIRDQIQAVRRV.

This sequence belongs to the UvrC family. As to quaternary structure, interacts with UvrB in an incision complex.

The protein localises to the cytoplasm. In terms of biological role, the UvrABC repair system catalyzes the recognition and processing of DNA lesions. UvrC both incises the 5' and 3' sides of the lesion. The N-terminal half is responsible for the 3' incision and the C-terminal half is responsible for the 5' incision. The polypeptide is UvrABC system protein C (Escherichia coli (strain ATCC 8739 / DSM 1576 / NBRC 3972 / NCIMB 8545 / WDCM 00012 / Crooks)).